The primary structure comprises 947 residues: Microtubule cross-linking factor 3 (947 aa).

Residues 1–21 form the signal peptide; it reads MSQPPIGGAAPATAAASPAAA. 3 disordered regions span residues 1-251, 266-368, and 496-524; these read MSQP…SYWK, KERA…TLKN, and LSLKRRGSKDLPKSEKKAQQTPTEEDNED. 3 stretches are compositionally biased toward low complexity: residues 9-24, 72-81, and 109-137; these read AAPATAAASPAAAATE, QQQLQQQQQQ, and APKGAAPGAVQPVAGAEAAPAATLAALGG. Over residues 141 to 151 the composition is skewed to basic and acidic residues; it reads GPPEEPPRELE. Residues 164–180 show a composition bias toward gly residues; that stretch reads GEGGGGGGEGGGAGGGS. Residues 214–236 show a composition bias toward low complexity; it reads ASPSPSSSSAGKTPGTGSRNSGS. Gly residues predominate over residues 237 to 248; that stretch reads GVAGGGSGGGGS. 2 stretches are compositionally biased toward low complexity: residues 287 to 297 and 304 to 325; these read SSRSSPVSGPP and AVASASPMAAAAEGPQQSAEGS. Positions 342–726 form a coiled coil; the sequence is HPQQLQEQEE…GKVMQLQYEN (385 aa). Composition is skewed to basic and acidic residues over residues 355–368 and 496–513; these read EMEKLREENETLKN and LSLKRRGSKDLPKSEKKA. Serine 569 carries the post-translational modification Phosphoserine. A disordered region spans residues 743–786; sequence GIRGSPRDSDAESDAGKKESDDDSRPPHRKREGPIGGESDSEEV. Over residues 747 to 768 the composition is skewed to basic and acidic residues; that stretch reads SPRDSDAESDAGKKESDDDSRP. Phosphoserine is present on serine 781. Residues 811-835 adopt a coiled-coil conformation; that stretch reads DRQQMKDIRSEAERLGKTIDRLIAD. A helical transmembrane segment spans residues 915–935; that stretch reads PIILLILILVLFSSLSYTTIF.

It belongs to the MTCL family.

It is found in the membrane. This Homo sapiens (Human) protein is Microtubule cross-linking factor 3.